The sequence spans 448 residues: Omega-6 fatty acid desaturase, chloroplastic (448 aa).

The N-terminal 69 residues, 1-69 (MASRIADSLF…VKRRIGCIKA (69 aa)), are a transit peptide targeting the chloroplast. An N-acetylvaline modification is found at Val70. 2 helical membrane passes run 124–144 (LKAL…LFMI) and 149–169 (WYLL…FFVI). Positions 171–175 (HDCAH) match the Histidine box-1 motif. The Histidine box-2 signature appears at 207–211 (HDRHH). Helical transmembrane passes span 282–302 (VFAF…ILGW) and 303–323 (VKFW…FTMV). Positions 367-371 (HIPHH) match the Histidine box-3 motif.

It belongs to the fatty acid desaturase type 1 family.

The protein localises to the plastid. It is found in the chloroplast inner membrane. The catalysed reaction is a (9Z)-octadecenoyl-containing glycerolipid + 2 reduced [2Fe-2S]-[ferredoxin] + O2 + 2 H(+) = a (9Z,12Z)-octadecadienoyl-containing glycerolipid + 2 oxidized [2Fe-2S]-[ferredoxin] + 2 H2O. The protein operates within lipid metabolism; polyunsaturated fatty acid biosynthesis. In terms of biological role, chloroplast omega-6 fatty acid desaturase introduces the second double bond in the biosynthesis of 16:3 and 18:3 fatty acids, important constituents of plant membranes. It is thought to use ferredoxin as an electron donor and to act on fatty acids esterified to galactolipids, sulfolipids and phosphatidylglycerol. In Arabidopsis thaliana (Mouse-ear cress), this protein is Omega-6 fatty acid desaturase, chloroplastic.